The following is a 190-amino-acid chain: dTTP/UTP pyrophosphatase (190 aa).

Catalysis depends on Asp71, which acts as the Proton acceptor.

Belongs to the Maf family. YhdE subfamily. Requires a divalent metal cation as cofactor.

It localises to the cytoplasm. It catalyses the reaction dTTP + H2O = dTMP + diphosphate + H(+). It carries out the reaction UTP + H2O = UMP + diphosphate + H(+). Nucleoside triphosphate pyrophosphatase that hydrolyzes dTTP and UTP. May have a dual role in cell division arrest and in preventing the incorporation of modified nucleotides into cellular nucleic acids. The protein is dTTP/UTP pyrophosphatase of Xanthomonas oryzae pv. oryzae (strain MAFF 311018).